The sequence spans 482 residues: Cysteine--tRNA ligase (482 aa).

Cys-29 serves as a coordination point for Zn(2+). Positions 31–41 match the 'HIGH' region motif; sequence PTVYDSAHVGH. Residues Cys-210, His-235, and Glu-239 each contribute to the Zn(2+) site. The 'KMSKS' region signature appears at 272 to 276; sequence KMSKS. Lys-275 serves as a coordination point for ATP.

It belongs to the class-I aminoacyl-tRNA synthetase family. In terms of assembly, monomer. It depends on Zn(2+) as a cofactor.

The protein resides in the cytoplasm. It catalyses the reaction tRNA(Cys) + L-cysteine + ATP = L-cysteinyl-tRNA(Cys) + AMP + diphosphate. This is Cysteine--tRNA ligase from Anaeromyxobacter sp. (strain Fw109-5).